We begin with the raw amino-acid sequence, 39 residues long: Bacteriocin SRCAM 602 (39 aa).

The protein belongs to the bacteriocin class IIA/YGNGV family.

The protein resides in the secreted. Functionally, bacteriocin with antibacterial activity against C.jejuni. In Paenibacillus polymyxa (Bacillus polymyxa), this protein is Bacteriocin SRCAM 602.